Here is a 264-residue protein sequence, read N- to C-terminus: MRYKILVTNDDGYEAKGLRALVKALKELEDVEVMVVAPASEKSACGHSLTLVRPLRFVGVDDNFFKLDDGTPSDCVYLALSTIYVDSKPDLLISGINRGSNMGEDITYSGTAAGAMEGVLHDVPSIAISQVMDFSDPQGDFTLAQKVIKELVIKIKNGSFPLPQREFLNVNIPPDLDSTDNRDAKMVVTYAGYRFYANDSHIHRNPRGEEFYWLGLHPLDFLPREGIKGISDYEAIEAGNISITPIQLDMSAYKSMNKLKEWIE.

4 residues coordinate a divalent metal cation: Asp10, Asp11, Ser43, and Asn97.

It belongs to the SurE nucleotidase family. Requires a divalent metal cation as cofactor.

The protein resides in the cytoplasm. The catalysed reaction is a ribonucleoside 5'-phosphate + H2O = a ribonucleoside + phosphate. Its function is as follows. Nucleotidase that shows phosphatase activity on nucleoside 5'-monophosphates. The polypeptide is 5'-nucleotidase SurE (Sulfurimonas denitrificans (strain ATCC 33889 / DSM 1251) (Thiomicrospira denitrificans (strain ATCC 33889 / DSM 1251))).